A 309-amino-acid polypeptide reads, in one-letter code: uncharacterized protein (309 aa).

The protein belongs to the anthranilate phosphoribosyltransferase family.

This is an uncharacterized protein from Aquifex aeolicus (strain VF5).